Consider the following 284-residue polypeptide: Tropomyosin beta chain (284 aa).

Methionine 1 is subject to N-acetylmethionine. Residues 1 to 284 adopt a coiled-coil conformation; it reads MEAIKKKMQM…DNALNDITSL (284 aa). Composition is skewed to basic and acidic residues over residues 22 to 40 and 51 to 66; these read AEQA…KQLE and KGTE…SVKE. Positions 22–66 are disordered; sequence AEQAEADKKQAEDRCKQLEEEQQGLQKKLKGTEDEVEKYSESVKE.

It belongs to the tropomyosin family. In terms of assembly, homodimer. Heterodimer of an alpha (TPM1, TPM3 or TPM4) and a beta (TPM2) chain.

The protein resides in the cytoplasm. The protein localises to the cytoskeleton. Its function is as follows. Binds to actin filaments in muscle and non-muscle cells. Plays a central role, in association with the troponin complex, in the calcium dependent regulation of vertebrate striated muscle contraction. Smooth muscle contraction is regulated by interaction with caldesmon. In non-muscle cells is implicated in stabilizing cytoskeleton actin filaments. The sequence is that of Tropomyosin beta chain (TPM2) from Gallus gallus (Chicken).